We begin with the raw amino-acid sequence, 1826 residues long: Kinesin-like protein KIF13B (1826 aa).

The Kinesin motor domain occupies Lys-5–Ile-353. Gly-103 to Ser-110 contacts ATP. Residues Asn-364–Ser-439 adopt a coiled-coil conformation. Residues Thr-471–Gly-535 form the FHA domain. Positions Lys-546–Ser-582 are disordered. The span at Ser-561–Gln-570 shows a compositional bias: polar residues. Coiled coils occupy residues Met-607–Arg-710, Ser-752–Glu-772, and Leu-1096–Ala-1143. Position 661 is a phosphoserine (Ser-661). The disordered stretch occupies residues Glu-1367–Ser-1420. 2 stretches are compositionally biased toward polar residues: residues Arg-1378–Arg-1392 and Glu-1409–Ser-1420. At Ser-1379 the chain carries Phosphoserine. Residue Ser-1381 is modified to Phosphoserine; by MARK2. Ser-1382 and Ser-1391 each carry phosphoserine. Ser-1410 is subject to Phosphoserine; by MARK2. Phosphoserine is present on residues Ser-1432, Ser-1438, and Ser-1537. At Thr-1545 the chain carries Phosphothreonine. Ser-1559 carries the post-translational modification Phosphoserine. Residues Ser-1579–Ile-1607 show a composition bias toward low complexity. 2 disordered regions span residues Ser-1579–Arg-1650 and Met-1662–Pro-1698. The segment covering Ser-1608 to Pro-1624 has biased composition (pro residues). Ser-1644 carries the phosphoserine modification. Residues Pro-1671–Ala-1688 show a composition bias toward low complexity. Residues Gly-1721–Arg-1763 form the CAP-Gly domain. At Ser-1797 the chain carries Phosphoserine.

Belongs to the TRAFAC class myosin-kinesin ATPase superfamily. Kinesin family. Binds to DLG1 and DLG4. Interacts (when phosphorylated at Ser-1381 and Ser-1410) with 14-3-3. Phosphorylated at Ser-1381 and Ser-1410 by MARK2, promoting interaction with 14-3-3 and inhibiting microtubule-dependent accumulation and formation of axons. As to expression, ubiquitous.

It localises to the cytoplasm. It is found in the cytoskeleton. Its subcellular location is the cell projection. The protein localises to the axon. Its function is as follows. Involved in reorganization of the cortical cytoskeleton. Regulates axon formation by promoting the formation of extra axons. May be functionally important for the intracellular trafficking of MAGUKs and associated protein complexes. This chain is Kinesin-like protein KIF13B (KIF13B), found in Homo sapiens (Human).